Reading from the N-terminus, the 655-residue chain is Potassium voltage-gated channel subfamily A member 4 (655 aa).

Residues 1 to 306 (MEVAMVSAES…LLFEYPESSS (306 aa)) are Cytoplasmic-facing. Residues 24-153 (QARARERERL…SEEDHGDGCS (130 aa)) form a disordered region. Low complexity predominate over residues 36 to 50 (SRAAAAAAVAAATAA). Positions 81 to 90 (GSREEEATRT) are enriched in basic and acidic residues. The segment covering 91–100 (EKKKKLHHRQ) has biased composition (basic residues). Position 123 is a phosphoserine (serine 123). Over residues 123-138 (SEEEEDEEEEEEEEEE) the composition is skewed to acidic residues. Positions 139-150 (GRFYYSEEDHGD) are enriched in basic and acidic residues. Residues 307 to 328 (PARGIAIVSVLVILISIVIFCL) traverse the membrane as a helical segment. The Extracellular portion of the chain corresponds to 329–372 (ETLPEFRDDRDLIMALSAGGHSRLLNDTSAPHLENSGHTIFNDP). The N-linked (GlcNAc...) asparagine glycan is linked to asparagine 354. Residues 373–394 (FFIVETVCIVWFSFEFVVRCFA) form a helical membrane-spanning segment. Over 395-405 (CPSQALFFKNI) the chain is Cytoplasmic. The helical transmembrane segment at 406-426 (MNIIDIVSILPYFITLGTDLA) threads the bilayer. At 427 to 441 (QQQGGGNGQQQQAMS) the chain is on the extracellular side. A helical; Voltage-sensor membrane pass occupies residues 442 to 462 (FAILRIIRLVRVFRIFKLSRH). At 463 to 477 (SKGLQILGHTLRASM) the chain is on the cytoplasmic side. An S4-S5 linker region spans residues 464 to 477 (KGLQILGHTLRASM). Residues 478-499 (RELGLLIFFLFIGVILFSSAVY) form a helical membrane-spanning segment. At 500–513 (FAEADEPTTHFQSI) the chain is on the extracellular side. Positions 514-525 (PDAFWWAVVTMT) form an intramembrane region, helical. The Selectivity filter signature appears at 526-531 (TVGYGD). The stretch at 526 to 533 (TVGYGDMK) is an intramembrane region. Over 534–540 (PITVGGK) the chain is Extracellular. The helical transmembrane segment at 541-569 (IVGSLCAIAGVLTIALPVPVIVSNFNYFY) threads the bilayer. Residues 570–655 (HRETENEEQT…SNAKAVETDV (86 aa)) are Cytoplasmic-facing. Serine 601 is modified (phosphoserine; by PKA). Basic and acidic residues predominate over residues 631 to 642 (CQGKGDDSETDK). A disordered region spans residues 631 to 655 (CQGKGDDSETDKNNCSNAKAVETDV). The PDZ-binding motif lies at 653 to 655 (TDV).

This sequence belongs to the potassium channel family. A (Shaker) (TC 1.A.1.2) subfamily. Kv1.4/KCNA4 sub-subfamily. In terms of assembly, homotetramer and heterotetramer of potassium channel proteins. Interacts with KCNAB1 and KCNAB2. Interacts with DLG1, DLG2 and DLG4 via their PDZ domains. Interacts with SIGMAR1. Part of a complex containing KCNA1, KCNAB1 and LGI1. Detected in a complex with KCNA1. Interacts with KCNA2. Interacts (via cytoplasmic N-terminal domain) with KCNRG. N-glycosylated. In terms of tissue distribution, detected in brain (at protein level). Heart and brain.

The protein localises to the cell membrane. It localises to the cell projection. It is found in the axon. The enzyme catalyses K(+)(in) = K(+)(out). Functionally, voltage-gated potassium channel that mediates transmembrane potassium transport in excitable membranes. Forms tetrameric potassium-selective channels through which potassium ions pass in accordance with their electrochemical gradient. The channel alternates between opened and closed conformations in response to the voltage difference across the membrane. Can form functional homotetrameric channels and heterotetrameric channels that contain variable proportions of KCNA1, KCNA2, KCNA4, KCNA5, and possibly other family members as well; channel properties depend on the type of alpha subunits that are part of the channel. Channel properties are modulated by cytoplasmic beta subunits that regulate the subcellular location of the alpha subunits and promote rapid inactivation. In vivo, membranes probably contain a mixture of heteromeric potassium channel complexes, making it difficult to assign currents observed in intact tissues to any particular potassium channel family member. Homotetrameric KCNA4 forms a potassium channel that opens in response to membrane depolarization, followed by rapid spontaneous channel closure. Likewise, a heterotetrameric channel formed by KCNA1 and KCNA4 shows rapid inactivation. The protein is Potassium voltage-gated channel subfamily A member 4 (Kcna4) of Rattus norvegicus (Rat).